We begin with the raw amino-acid sequence, 259 residues long: MTDLTAAARLALSLMDLTTLNDDDTDEKVTKLCHQAKSPEGNTAAICIYPRFIPLARKVLREQGTPEIRIATVTNFPHGNDDLDIALAETNAALAYGADEVDVVFPYRALMAGNEQIGFDIVKACKDACAKAGALLKVIIETGELKDPALIRKASEISIKAGADFIKTSTGKVPVNATLESAELMLQVIHDMGVGKEVGFKPAGGVRTAEEAAQYLALANRIMGDNWVDARHFRFGASSLLGNLLATLGHGEQKSSSGY.

The active-site Proton donor/acceptor is D102. K167 (schiff-base intermediate with acetaldehyde) is an active-site residue. K201 (proton donor/acceptor) is an active-site residue.

Belongs to the DeoC/FbaB aldolase family. DeoC type 2 subfamily.

It localises to the cytoplasm. The catalysed reaction is 2-deoxy-D-ribose 5-phosphate = D-glyceraldehyde 3-phosphate + acetaldehyde. Its pathway is carbohydrate degradation; 2-deoxy-D-ribose 1-phosphate degradation; D-glyceraldehyde 3-phosphate and acetaldehyde from 2-deoxy-alpha-D-ribose 1-phosphate: step 2/2. Functionally, catalyzes a reversible aldol reaction between acetaldehyde and D-glyceraldehyde 3-phosphate to generate 2-deoxy-D-ribose 5-phosphate. This Proteus mirabilis (strain HI4320) protein is Deoxyribose-phosphate aldolase.